A 317-amino-acid polypeptide reads, in one-letter code: MSQPTPAVRTFQDLILALQQYWAEQGCVVLQPYDMEVGAGTFHTATFLRAIGPETWNAAYVQPSRRPTDGRYGENPNRLQHYYQFQVVLKPNPENFQELYLGSLKHVGLDPLVHDIRFVEDNWESPTLGAWGLGWEVWLNGMEVTQFTYFQQAGGIECYPVTGEITYGLERLAMYLQGVDSVYDLVWADGPFGKVTYGDVFHQNEVEQSTYNFEHANVEKLFELFDFYESEAKRLIELDQPLPLPSYEMVLKASHTFNLLDARRAISVTARQQYILRVRTLARSVAQAYLLARAKLGFPMATPDLRDEVLAKLEAAQ.

It belongs to the class-II aminoacyl-tRNA synthetase family. Tetramer of two alpha and two beta subunits.

The protein localises to the cytoplasm. It catalyses the reaction tRNA(Gly) + glycine + ATP = glycyl-tRNA(Gly) + AMP + diphosphate. This chain is Glycine--tRNA ligase alpha subunit, found in Pseudomonas fluorescens (strain ATCC BAA-477 / NRRL B-23932 / Pf-5).